Reading from the N-terminus, the 59-residue chain is UPF0181 protein CKO_01169 (59 aa).

This sequence belongs to the UPF0181 family.

This Citrobacter koseri (strain ATCC BAA-895 / CDC 4225-83 / SGSC4696) protein is UPF0181 protein CKO_01169.